The following is a 363-amino-acid chain: MIIDTSQVQDIHSFSRLEFLKEFYGILWVLVPILTTVLGITIGVLVIVWLEREISAGIQQRIGPEYAGPLGVLQALADGTKLLFKENLLPSRGDTRLFSIGPSIAVISILLSYSVIPFGYRLVLADLPIGVFLWIAISSVAPIGLLMSGYGSNNKYSFLGGLRAAAQSISYEIPLTLCVLSISLLSNSSSTVDIVEAQSKYGFWGWNLWRQPIGFVIFLISSLAECERLPFDLPEAEEELVAGYQTEYSGIKFGLFYVASYLNLLVSSLFVTVLYLGGWDISIPYILGYELFEINKVYEVFGMTISIFITLAKTYLFLFISIATRWTLPRLRIDQLLNLGWKFLLPISLGNLLLTTSFQLFSL.

6 helical membrane passes run W28–V48, F98–F118, L127–M147, Y248–S268, V300–I320, and F343–L363.

It belongs to the complex I subunit 1 family. In terms of assembly, NDH is composed of at least 16 different subunits, 5 of which are encoded in the nucleus.

The protein resides in the plastid. Its subcellular location is the chloroplast thylakoid membrane. It catalyses the reaction a plastoquinone + NADH + (n+1) H(+)(in) = a plastoquinol + NAD(+) + n H(+)(out). The catalysed reaction is a plastoquinone + NADPH + (n+1) H(+)(in) = a plastoquinol + NADP(+) + n H(+)(out). In terms of biological role, NDH shuttles electrons from NAD(P)H:plastoquinone, via FMN and iron-sulfur (Fe-S) centers, to quinones in the photosynthetic chain and possibly in a chloroplast respiratory chain. The immediate electron acceptor for the enzyme in this species is believed to be plastoquinone. Couples the redox reaction to proton translocation, and thus conserves the redox energy in a proton gradient. This is NAD(P)H-quinone oxidoreductase subunit 1, chloroplastic from Cucumis sativus (Cucumber).